A 176-amino-acid chain; its full sequence is ATP-dependent protease subunit HslV (176 aa).

The active site involves Thr2. Residues Gly157, Cys160, and Thr163 each coordinate Na(+).

It belongs to the peptidase T1B family. HslV subfamily. In terms of assembly, a double ring-shaped homohexamer of HslV is capped on each side by a ring-shaped HslU homohexamer. The assembly of the HslU/HslV complex is dependent on binding of ATP.

It localises to the cytoplasm. The enzyme catalyses ATP-dependent cleavage of peptide bonds with broad specificity.. Allosterically activated by HslU binding. Protease subunit of a proteasome-like degradation complex believed to be a general protein degrading machinery. In Pectobacterium atrosepticum (strain SCRI 1043 / ATCC BAA-672) (Erwinia carotovora subsp. atroseptica), this protein is ATP-dependent protease subunit HslV.